A 580-amino-acid polypeptide reads, in one-letter code: DBIRD complex subunit ZNF326 (580 aa).

Residues 1 to 124 form a mediates transcriptional activation region; it reads MDFEDDYVHS…YRNSLDSFGG (124 aa). Residues S48, S56, S63, S69, S81, S82, S91, S106, S114, S118, S121, and S137 each carry the phosphoserine modification. A Glycyl lysine isopeptide (Lys-Gly) (interchain with G-Cter in SUMO2) cross-link involves residue K140. The disordered stretch occupies residues 156 to 196; the sequence is SYSSFSSPHMKPAPVGSRGRGTPAYPESTFGSRSYDAFGGP. R173 is modified (omega-N-methylarginine). S212 bears the Phosphoserine mark. R235 carries the omega-N-methylarginine modification. A Bipartite nuclear localization signal motif is present at residues 238–260; that stretch reads KRKMMQIFIKPGGAFIKKPKLAK. K240 participates in a covalent cross-link: Glycyl lysine isopeptide (Lys-Gly) (interchain with G-Cter in SUMO2). The residue at position 247 (K247) is an N6-acetyllysine; alternate. K247 is covalently cross-linked (Glycyl lysine isopeptide (Lys-Gly) (interchain with G-Cter in SUMO2); alternate). Glycyl lysine isopeptide (Lys-Gly) (interchain with G-Cter in SUMO2) cross-links involve residues K254 and K264. The disordered stretch occupies residues 256–302; it reads PKLAKPMDKMNLSKSPTKTDPKNEEEEKRRIEARREKQRRRREKNSE. Position 270 is a phosphoserine (S270). A compositionally biased stretch (basic and acidic residues) spans 272–290; sequence TKTDPKNEEEEKRRIEARR. A C2H2 AKAP95-type 1 zinc finger spans residues 314–336; the sequence is CSFCKFRTFEEKDIELHLESSSH. K401 is covalently cross-linked (Glycyl lysine isopeptide (Lys-Gly) (interchain with G-Cter in SUMO2)). The C2H2 AKAP95-type 2 zinc-finger motif lies at 407-430; that stretch reads CSACSVYIPALHSSVQLHLKSPDH. Glycyl lysine isopeptide (Lys-Gly) (interchain with G-Cter in SUMO2) cross-links involve residues K459 and K467. The interval 470–580 is disordered; the sequence is NPFEIQDHPQ…ATEQCEHRQM (111 aa). The span at 483 to 529 shows a compositional bias: acidic residues; that stretch reads IEGDEEDEEKIDEPIEEEEEEEEEEEEEGEEAGSVEEEGDVEGEEGT. A compositionally biased stretch (low complexity) spans 530 to 539; it reads AEAAAAGEAD. Residues 540 to 562 are compositionally biased toward acidic residues; that stretch reads AVGEAEGAGEAEEAEEEEEEEGT.

This sequence belongs to the AKAP95 family. In terms of assembly, component of the DBIRD complex. Interacts with CCAR2; the interaction is direct. As to expression, ubiquitously expressed in adult tissues. Highly expressed in neuronal tissues such as brain and neural tube.

The protein localises to the nucleus matrix. Functionally, core component of the DBIRD complex, a multiprotein complex that acts at the interface between core mRNP particles and RNA polymerase II (RNAPII) and integrates transcript elongation with the regulation of alternative splicing: the DBIRD complex affects local transcript elongation rates and alternative splicing of a large set of exons embedded in (A + T)-rich DNA regions. May also play a role in neuronal differentiation. Able to bind DNA and activate expression in vitro. The polypeptide is DBIRD complex subunit ZNF326 (Znf326) (Mus musculus (Mouse)).